We begin with the raw amino-acid sequence, 142 residues long: 3-hydroxyacyl-[acyl-carrier-protein] dehydratase FabZ (142 aa).

Histidine 41 is an active-site residue.

The protein belongs to the thioester dehydratase family. FabZ subfamily.

Its subcellular location is the cytoplasm. The catalysed reaction is a (3R)-hydroxyacyl-[ACP] = a (2E)-enoyl-[ACP] + H2O. Involved in unsaturated fatty acids biosynthesis. Catalyzes the dehydration of short chain beta-hydroxyacyl-ACPs and long chain saturated and unsaturated beta-hydroxyacyl-ACPs. The sequence is that of 3-hydroxyacyl-[acyl-carrier-protein] dehydratase FabZ from Symbiobacterium thermophilum (strain DSM 24528 / JCM 14929 / IAM 14863 / T).